The sequence spans 722 residues: Polyribonucleotide nucleotidyltransferase (722 aa).

Mg(2+) contacts are provided by Asp-495 and Asp-501. One can recognise a KH domain in the interval 562–621 (PRLLSFRIDPELIGTVIGPGGRTIKGITERTNTKIDIEDGGIVTIASHDGAAAEEAQRII). An S1 motif domain is found at 631–699 (GEIFPGSITR…NRGRINLTLR (69 aa)). The tract at residues 700 to 722 (GVSQNGGMSNYPEPTPTPVAPLT) is disordered. The span at 712 to 722 (EPTPTPVAPLT) shows a compositional bias: pro residues.

Belongs to the polyribonucleotide nucleotidyltransferase family. The cofactor is Mg(2+).

It is found in the cytoplasm. The catalysed reaction is RNA(n+1) + phosphate = RNA(n) + a ribonucleoside 5'-diphosphate. Involved in mRNA degradation. Catalyzes the phosphorolysis of single-stranded polyribonucleotides processively in the 3'- to 5'-direction. The sequence is that of Polyribonucleotide nucleotidyltransferase from Prochlorococcus marinus (strain NATL2A).